We begin with the raw amino-acid sequence, 66 residues long: Large ribosomal subunit protein bL31 (66 aa).

Zn(2+)-binding residues include cysteine 16, cysteine 18, cysteine 36, and cysteine 39.

This sequence belongs to the bacterial ribosomal protein bL31 family. Type A subfamily. As to quaternary structure, part of the 50S ribosomal subunit. Requires Zn(2+) as cofactor.

Its function is as follows. Binds the 23S rRNA. This chain is Large ribosomal subunit protein bL31, found in Nitratiruptor sp. (strain SB155-2).